The following is a 335-amino-acid chain: MKNELEKVMAGRDMTENEMNMLANSIIQGELSDVQIASFLVALKMKGESASELTGLARALQKAAISIPTNLTNAMDNCGTGGDRSFSFNISTTAAFVLAAGGVNMAKHGNRSITSKSGSADVLEALGINLYLPAEKLAQVFDKVGLVFLFAQNLHPAMKYFTPVRRQLEIPTIMNLTGPLINPIPLDTQLLGTSRPDLLELTANVLKGLGRKRALVITGEGGMDEATPFGLNHYALLENGEVTLHKFRAADVGMSEVALNDIRGGEAPENSEILKNVLENCSSAFLETTVLNAGLGFYANGKVDSIKSGIELAREVIAQGAALEKLHELQAEQIG.

Residues G79, 82–83 (GD), S87, 89–92 (NIST), 107–115 (KHGNRSITS), and S119 each bind 5-phospho-alpha-D-ribose 1-diphosphate. G79 is a binding site for anthranilate. Residue S91 participates in Mg(2+) binding. Position 110 (N110) interacts with anthranilate. Residue R165 coordinates anthranilate. Mg(2+) contacts are provided by D224 and E225.

It belongs to the anthranilate phosphoribosyltransferase family. As to quaternary structure, homodimer. Requires Mg(2+) as cofactor.

It carries out the reaction N-(5-phospho-beta-D-ribosyl)anthranilate + diphosphate = 5-phospho-alpha-D-ribose 1-diphosphate + anthranilate. The protein operates within amino-acid biosynthesis; L-tryptophan biosynthesis; L-tryptophan from chorismate: step 2/5. Its function is as follows. Catalyzes the transfer of the phosphoribosyl group of 5-phosphorylribose-1-pyrophosphate (PRPP) to anthranilate to yield N-(5'-phosphoribosyl)-anthranilate (PRA). This chain is Anthranilate phosphoribosyltransferase, found in Lactococcus lactis subsp. cremoris (strain SK11).